A 65-amino-acid polypeptide reads, in one-letter code: MIIWILPCRMPMNLRKDERINISKTSSSKIKEINQLRHIIRKKNRQIQILIIMLNILRCCHRMKE.

This sequence belongs to the rhabdoviruses C protein family.

Seems to stimulates transcription by the viral polymerase. May play a role in viral pathogenesis or transmission by insects vectors. The protein is Protein C' (P) of Aedes (Bovine).